The sequence spans 360 residues: MAGNSIGQLFKVTTFGESHGLALGCIIDGLPPNMALSEADIQPDLDRRKPGTSRYTTARREADQVHILSGVFAGKTTGTSIGLIIKNNDQRSSDYREIMDVFRPGHADYTYQQKYGIRDYRGGGRSSARETAMRVAAGAIAKKYLSEQFGIQVRAYLAQIGTIKIDPTCVADIAQIDWKYVNNNPFFCPDATAVPKFDELIRCLKKEGDSMGAKLTVIAENVPTGLGEPVFDRLDADLAHALMSINAVKAVEIGDGFAVVSQKGSQHRDQMTPNGFLSNHAGGILGGISSGQPIIAHIAFKPTSSIMVPGKSVNMDNQAIELVTKGRHDPCVGIRAVPIAEAMVAIVLLDHLLRFKAQCG.

NADP(+)-binding residues include Arg48 and Arg54. FMN-binding positions include 125 to 127 (RSS), 246 to 247 (NA), Gly286, 301 to 305 (KPTSS), and Arg327.

This sequence belongs to the chorismate synthase family. In terms of assembly, homotetramer. FMNH2 serves as cofactor.

It catalyses the reaction 5-O-(1-carboxyvinyl)-3-phosphoshikimate = chorismate + phosphate. It functions in the pathway metabolic intermediate biosynthesis; chorismate biosynthesis; chorismate from D-erythrose 4-phosphate and phosphoenolpyruvate: step 7/7. In terms of biological role, catalyzes the anti-1,4-elimination of the C-3 phosphate and the C-6 proR hydrogen from 5-enolpyruvylshikimate-3-phosphate (EPSP) to yield chorismate, which is the branch point compound that serves as the starting substrate for the three terminal pathways of aromatic amino acid biosynthesis. This reaction introduces a second double bond into the aromatic ring system. The polypeptide is Chorismate synthase (Haemophilus ducreyi (strain 35000HP / ATCC 700724)).